The primary structure comprises 395 residues: Lipoyl synthase, mitochondrial (395 aa).

The N-terminal 14 residues, 1 to 14 (MISLRSISRSPAVQ), are a transit peptide targeting the mitochondrion. [4Fe-4S] cluster contacts are provided by C112, C117, C123, C142, C146, C149, and S357. The Radical SAM core domain occupies 127–346 (KKSEATATIM…RDTALQMGFL (220 aa)).

The protein belongs to the radical SAM superfamily. Lipoyl synthase family. [4Fe-4S] cluster is required as a cofactor.

It localises to the mitochondrion. The enzyme catalyses [[Fe-S] cluster scaffold protein carrying a second [4Fe-4S](2+) cluster] + N(6)-octanoyl-L-lysyl-[protein] + 2 oxidized [2Fe-2S]-[ferredoxin] + 2 S-adenosyl-L-methionine + 4 H(+) = [[Fe-S] cluster scaffold protein] + N(6)-[(R)-dihydrolipoyl]-L-lysyl-[protein] + 4 Fe(3+) + 2 hydrogen sulfide + 2 5'-deoxyadenosine + 2 L-methionine + 2 reduced [2Fe-2S]-[ferredoxin]. It functions in the pathway protein modification; protein lipoylation via endogenous pathway; protein N(6)-(lipoyl)lysine from octanoyl-[acyl-carrier-protein]: step 2/2. Catalyzes the radical-mediated insertion of two sulfur atoms into the C-6 and C-8 positions of the octanoyl moiety bound to the lipoyl domains of lipoate-dependent enzymes, thereby converting the octanoylated domains into lipoylated derivatives. This Debaryomyces hansenii (strain ATCC 36239 / CBS 767 / BCRC 21394 / JCM 1990 / NBRC 0083 / IGC 2968) (Yeast) protein is Lipoyl synthase, mitochondrial.